Here is a 291-residue protein sequence, read N- to C-terminus: Kidney mitochondrial carrier protein 1 (291 aa).

3 Solcar repeats span residues 7–96 (KPFI…LKRL), 104–189 (ETLV…TKKH), and 198–289 (DTVY…LKKL). 6 helical membrane-spanning segments follow: residues 9 to 26 (FIYGGLASITAECGTFPI), 71 to 89 (GIAPAMLRQASYGTIKIGT), 106 to 124 (LVLNAFCGVLSGVVSSCIA), 164 to 183 (GVSLTAQRAAIVVGVELPVY), 204 to 224 (FLSSFTCGLAGALASNPVDVV), and 264 to 283 (GFWPNWLRLGPWNIIFFITY).

It belongs to the mitochondrial carrier (TC 2.A.29) family.

It localises to the mitochondrion inner membrane. The catalysed reaction is sulfite(in) + sulfate(out) = sulfite(out) + sulfate(in). It carries out the reaction thiosulfate(in) + sulfate(out) = thiosulfate(out) + sulfate(in). The enzyme catalyses sulfate(out) + phosphate(in) = sulfate(in) + phosphate(out). It catalyses the reaction oxalate(in) + sulfate(out) = oxalate(out) + sulfate(in). The catalysed reaction is malonate(in) + sulfate(out) = malonate(out) + sulfate(in). It carries out the reaction maleate(in) + sulfate(out) = maleate(out) + sulfate(in). The enzyme catalyses (S)-malate(in) + sulfate(out) = (S)-malate(out) + sulfate(in). It catalyses the reaction (3S)-citramalate(in) + sulfate(out) = (3S)-citramalate(out) + sulfate(in). The catalysed reaction is (3R)-citramalate(in) + sulfate(out) = (3R)-citramalate(out) + sulfate(in). It carries out the reaction sulfate(out) + succinate(in) = sulfate(in) + succinate(out). The enzyme catalyses (S,S)-tartrate(in) + sulfate(out) = (S,S)-tartrate(out) + sulfate(in). It catalyses the reaction (2R,3R)-tartrate(in) + sulfate(out) = (2R,3R)-tartrate(out) + sulfate(in). The catalysed reaction is D-aspartate(in) + sulfate(out) = D-aspartate(out) + sulfate(in). It carries out the reaction L-aspartate(in) + sulfate(out) = L-aspartate(out) + sulfate(in). The enzyme catalyses sulfate(in) = sulfate(out). It catalyses the reaction phosphate(in) = phosphate(out). The catalysed reaction is (S)-malate(out) = (S)-malate(in). Its function is as follows. Probable transporter. Antiporter that transports inorganic anions (sulfate, sulfite, thiosulfate and phosphate) and, to a lesser extent, a variety of dicarboxylates (e.g. malonate, malate and citramalate) and, even more so, aspartate. The sulfate/sulfate exchange is much higher than the phosphate/phosphate and malate/malate exchanges. The transport affinities is higher for sulfate and thiosulfate than for any other substrate. May catalyze the export of sulfite and thiosulfate (the hydrogen sulfide degradation products) from the mitochondria, thereby modulating the level of the hydrogen sulfide. Also may mediate a very low unidirectional transport of sulfate, phosphate and (S)-malate. This chain is Kidney mitochondrial carrier protein 1, found in Xenopus laevis (African clawed frog).